The primary structure comprises 252 residues: Triosephosphate isomerase (252 aa).

Substrate is bound at residue 10–12 (NWK). Catalysis depends on H96, which acts as the Electrophile. E168 (proton acceptor) is an active-site residue. Residues G174, S213, and 234-235 (GG) contribute to the substrate site.

Belongs to the triosephosphate isomerase family. As to quaternary structure, homodimer.

The protein localises to the cytoplasm. The enzyme catalyses D-glyceraldehyde 3-phosphate = dihydroxyacetone phosphate. It functions in the pathway carbohydrate biosynthesis; gluconeogenesis. The protein operates within carbohydrate degradation; glycolysis; D-glyceraldehyde 3-phosphate from glycerone phosphate: step 1/1. Functionally, involved in the gluconeogenesis. Catalyzes stereospecifically the conversion of dihydroxyacetone phosphate (DHAP) to D-glyceraldehyde-3-phosphate (G3P). This Idiomarina loihiensis (strain ATCC BAA-735 / DSM 15497 / L2-TR) protein is Triosephosphate isomerase.